A 426-amino-acid polypeptide reads, in one-letter code: tRNA(Ile)-lysidine synthase (426 aa).

19 to 24 provides a ligand contact to ATP; sequence SGGLDS.

This sequence belongs to the tRNA(Ile)-lysidine synthase family.

It localises to the cytoplasm. It carries out the reaction cytidine(34) in tRNA(Ile2) + L-lysine + ATP = lysidine(34) in tRNA(Ile2) + AMP + diphosphate + H(+). Its function is as follows. Ligates lysine onto the cytidine present at position 34 of the AUA codon-specific tRNA(Ile) that contains the anticodon CAU, in an ATP-dependent manner. Cytidine is converted to lysidine, thus changing the amino acid specificity of the tRNA from methionine to isoleucine. The polypeptide is tRNA(Ile)-lysidine synthase (Neisseria meningitidis serogroup A / serotype 4A (strain DSM 15465 / Z2491)).